Reading from the N-terminus, the 505-residue chain is Lysine--tRNA ligase (505 aa).

2 residues coordinate Mg(2+): glutamate 415 and glutamate 422.

Belongs to the class-II aminoacyl-tRNA synthetase family. In terms of assembly, homodimer. Mg(2+) serves as cofactor.

The protein resides in the cytoplasm. The enzyme catalyses tRNA(Lys) + L-lysine + ATP = L-lysyl-tRNA(Lys) + AMP + diphosphate. In Shigella boydii serotype 4 (strain Sb227), this protein is Lysine--tRNA ligase.